A 112-amino-acid polypeptide reads, in one-letter code: Protein BEX3 (112 aa).

The disordered stretch occupies residues 1-45 (MANIHQENEEMEQPVQNGEEDRPLGGGEGHQPERNHRRGQARRLA). The interval 69–94 (EIFMEEMREIRRKLRELQLRNCLRIL) is interaction with p75NTR/NGFR. Residues 69-112 (EIFMEEMREIRRKLRELQLRNCLRILMGELSNHHDHHDEFCLMP) are interaction with 14-3-3 epsilon. A Nuclear export signal motif is present at residues 78-88 (IRRKLRELQLR). A his cluster region spans residues 101 to 105 (HHDHH). Cys-109 is a Zn(2+) binding site.

This sequence belongs to the BEX family. Self-associates. Binds to the DEATH domain of p75NTR/NGFR. Interacts with 14-3-3 epsilon (YWHAE). Interacts with DIABLO/SMAC. Ubiquitinated. Degraded by the proteasome.

The protein localises to the nucleus. It is found in the cytoplasm. The protein resides in the cytosol. Functionally, may be a signaling adapter molecule involved in NGFR/p75NTR-mediated apoptosis induced by NGF. Plays a role in zinc-triggered neuronal death. In absence of reductive stress, acts as a pseudosubstrate for the CRL2(FEM1B) complex: associates with FEM1B via zinc, thereby preventing association between FEM1B and its substrates. In Bos taurus (Bovine), this protein is Protein BEX3.